The sequence spans 126 residues: Aspartate 1-decarboxylase (126 aa).

Ser25 functions as the Schiff-base intermediate with substrate; via pyruvic acid in the catalytic mechanism. Ser25 carries the post-translational modification Pyruvic acid (Ser). Thr57 lines the substrate pocket. The active-site Proton donor is Tyr58. Substrate is bound at residue 73-75 (GGA).

This sequence belongs to the PanD family. In terms of assembly, heterooctamer of four alpha and four beta subunits. It depends on pyruvate as a cofactor. In terms of processing, is synthesized initially as an inactive proenzyme, which is activated by self-cleavage at a specific serine bond to produce a beta-subunit with a hydroxyl group at its C-terminus and an alpha-subunit with a pyruvoyl group at its N-terminus.

Its subcellular location is the cytoplasm. It catalyses the reaction L-aspartate + H(+) = beta-alanine + CO2. It functions in the pathway cofactor biosynthesis; (R)-pantothenate biosynthesis; beta-alanine from L-aspartate: step 1/1. Its function is as follows. Catalyzes the pyruvoyl-dependent decarboxylation of aspartate to produce beta-alanine. The sequence is that of Aspartate 1-decarboxylase from Xanthomonas oryzae pv. oryzae (strain MAFF 311018).